We begin with the raw amino-acid sequence, 165 residues long: Phosphopantetheine adenylyltransferase (165 aa).

Thr-9 lines the substrate pocket. Residues 9-10 (TF) and His-17 each bind ATP. Lys-41, Leu-73, and Arg-87 together coordinate substrate. ATP is bound by residues 88 to 90 (GLR), Glu-98, and 123 to 129 (YQFISGT).

Belongs to the bacterial CoaD family. As to quaternary structure, homohexamer. Requires Mg(2+) as cofactor.

It localises to the cytoplasm. It catalyses the reaction (R)-4'-phosphopantetheine + ATP + H(+) = 3'-dephospho-CoA + diphosphate. The protein operates within cofactor biosynthesis; coenzyme A biosynthesis; CoA from (R)-pantothenate: step 4/5. Its function is as follows. Reversibly transfers an adenylyl group from ATP to 4'-phosphopantetheine, yielding dephospho-CoA (dPCoA) and pyrophosphate. This Burkholderia vietnamiensis (strain G4 / LMG 22486) (Burkholderia cepacia (strain R1808)) protein is Phosphopantetheine adenylyltransferase.